Consider the following 536-residue polypeptide: Quinate permease (536 aa).

Over 1–26 the chain is Cytoplasmic; the sequence is MTLLALKEDRPTPKAVYNWRVYTCAA. The helical transmembrane segment at 27 to 47 threads the bilayer; the sequence is IASFASCMIGYDSAFIGTTLA. Residues 48 to 74 lie on the Extracellular side of the membrane; it reads LPSFKKEFDFASYTPGALALLQSNIVS. A helical transmembrane segment spans residues 75–95; sequence VYQAGAFFGSLFAFATSYFLG. At 96–98 the chain is on the cytoplasmic side; that stretch reads RRK. A helical transmembrane segment spans residues 99-119; the sequence is SLIAFSVVFIIGAAIMLAADG. Residues 120–131 lie on the Extracellular side of the membrane; that stretch reads QGRGIAPIIAGR. The helical transmembrane segment at 132-152 threads the bilayer; sequence VLAGIGVGGASNMVPIYISEL. The Cytoplasmic segment spans residues 153-160; the sequence is APPAVRGR. Residues 161–181 form a helical membrane-spanning segment; that stretch reads LVGIYELGWQIGGLVGFWINY. The Extracellular portion of the chain corresponds to 182–195; that stretch reads GVNTTMAPTRSQWL. Asn184 carries N-linked (GlcNAc...) asparagine glycosylation. The helical transmembrane segment at 196 to 216 threads the bilayer; it reads IPFAVQLIPAGLLFLGSFWIP. Topologically, residues 217–285 are cytoplasmic; sequence ESPRWLFANG…SLKQRKVQWR (69 aa). Residues 286–306 traverse the membrane as a helical segment; the sequence is FFLGGMLFLWQNGSGINAINY. At 307–327 the chain is on the extracellular side; sequence YSPTVFRSIGITGTNTGFLTT. Residues 328–349 traverse the membrane as a helical segment; sequence GIFGVVKMVLTIVWLLWLVDLV. The Cytoplasmic portion of the chain corresponds to 350–352; that stretch reads GRR. A helical transmembrane segment spans residues 353-373; that stretch reads RMLFIGATGGSLCMWFIGAYI. Residues 374–389 are Extracellular-facing; the sequence is KIAGPGSTKAEDAKLT. Residues 390 to 410 form a helical membrane-spanning segment; it reads SGGIAAIFFFYLWTAFYTPSW. Residues 411–435 are Cytoplasmic-facing; the sequence is NGTPWVINSEMFDQNTRSLGQASAA. The chain crosses the membrane as a helical span at residues 436–456; sequence ANNWFWNFIISRFTPQMFIKM. Topologically, residues 457–458 are extracellular; that stretch reads EY. A helical membrane pass occupies residues 459–479; sequence GVYFFFASLMLLSIVFIYFFI. Residues 480-536 are Cytoplasmic-facing; the sequence is PETKSIPLEAMDRLFEIKPVHNANKILMAELNFDRNPEREESSLDEKDRVTQTENAV. The segment covering 516–530 has biased composition (basic and acidic residues); it reads PEREESSLDEKDRVT. The segment at 516–536 is disordered; the sequence is PEREESSLDEKDRVTQTENAV.

Belongs to the major facilitator superfamily. Sugar transporter (TC 2.A.1.1) family.

Its subcellular location is the membrane. The protein is Quinate permease (qa-y) of Neurospora terricola.